Here is a 66-residue protein sequence, read N- to C-terminus: UPF0434 protein M446_0487 (66 aa).

Belongs to the UPF0434 family.

This chain is UPF0434 protein M446_0487, found in Methylobacterium sp. (strain 4-46).